The chain runs to 424 residues: Folate-like transporter 2 (424 aa).

The N-linked (GlcNAc...) asparagine glycan is linked to Asn-35. Helical transmembrane passes span 48-68 (IWTYSYLITLIPAFLLTDVFL), 71-91 (PLLVFEAFSYFLCWVIFVFGK), 99-119 (LEVFYGWATATEIAYFAYIYV), 136-156 (ALLVGRFLAYALAQLLIGLNW), 164-184 (IISLVAMTIAVFLALILPGVE), and 233-253 (PLILKWSVWSALSSCIFYQVT). The N-linked (GlcNAc...) asparagine glycan is linked to Asn-254. 4 consecutive transmembrane segments (helical) span residues 299 to 319 (WGDLLLAVGSIGQAGLLFWMS), 324 to 344 (IVVLYLSYIFYRVIYQLTTTI), 361 to 381 (LFGINTFVALLLQSILTAVVI), and 392 to 412 (FVVYSCYHLVVAFGFAIIFGI).

It belongs to the reduced folate carrier (RFC) transporter (TC 2.A.48) family.

It is found in the membrane. Unlike folt-1, does not appear to act as a folate transporter. The chain is Folate-like transporter 2 (folt-2) from Caenorhabditis elegans.